Here is a 704-residue protein sequence, read N- to C-terminus: Penicillin-binding protein H (704 aa).

A helical transmembrane segment spans residues 23-43 (FFLAVFVLFTALIFKLGVVQI). The tract at residues 197 to 223 (MNPNKSNSNGKNGALLDEKKNSSQRPK) is disordered. Residues 200–209 (NKSNSNGKNG) show a composition bias toward low complexity. Residues 212–223 (LDEKKNSSQRPK) show a composition bias toward basic and acidic residues. Residue serine 415 is the Acyl-ester intermediate of the active site.

Belongs to the transpeptidase family.

It localises to the cell membrane. The enzyme catalyses Preferential cleavage: (Ac)2-L-Lys-D-Ala-|-D-Ala. Also transpeptidation of peptidyl-alanyl moieties that are N-acyl substituents of D-alanine.. It functions in the pathway cell wall biogenesis; peptidoglycan biosynthesis. In terms of biological role, involved in the polymerization of peptidoglycan. Plays a redundant role with PBP-2A (pbpA) in determining the rod shape of the cell during vegetative growth and spore outgrowth. The sequence is that of Penicillin-binding protein H from Bacillus subtilis (strain 168).